The primary structure comprises 448 residues: Protein odr-4 homolog (448 aa).

A run of 2 helical transmembrane segments spans residues 76–96 and 428–448; these read ASQLGRMLPGGLMVLGVFLMT and GLLISTVVASIAVIISFYYII.

Belongs to the ODR-4 family.

The protein localises to the membrane. In terms of biological role, may play a role in the trafficking of a subset of G-protein coupled receptors. The chain is Protein odr-4 homolog (odr4) from Xenopus tropicalis (Western clawed frog).